We begin with the raw amino-acid sequence, 822 residues long: Ribonucleoside-diphosphate reductase large subunit (822 aa).

Substrate is bound by residues Thr249, 264 to 265, Gly295, 470 to 474, and 651 to 655; these read SC, NLCTE, and PTAAS. The cysteines at positions 265 and 487 are disulfide-linked. Asn470 serves as the catalytic Proton acceptor. Residue Cys472 is the Cysteine radical intermediate of the active site. The active-site Proton acceptor is the Glu474.

It belongs to the ribonucleoside diphosphate reductase large chain family. Heterotetramer composed of a homodimer of the large subunit (R1) and a homodimer of the small subunit (R2). Larger multisubunit protein complex are also active, composed of (R1)n(R2)n.

It carries out the reaction a 2'-deoxyribonucleoside 5'-diphosphate + [thioredoxin]-disulfide + H2O = a ribonucleoside 5'-diphosphate + [thioredoxin]-dithiol. Its function is as follows. Ribonucleoside-diphosphate reductase holoenzyme provides the precursors necessary for viral DNA synthesis. Allows virus growth in non-dividing cells, as well as reactivation from latency in infected hosts. Catalyzes the biosynthesis of deoxyribonucleotides from the corresponding ribonucleotides. This Gallus gallus (Chicken) protein is Ribonucleoside-diphosphate reductase large subunit.